Consider the following 564-residue polypeptide: Proline--tRNA ligase (564 aa).

It belongs to the class-II aminoacyl-tRNA synthetase family. ProS type 1 subfamily. As to quaternary structure, homodimer.

Its subcellular location is the cytoplasm. The catalysed reaction is tRNA(Pro) + L-proline + ATP = L-prolyl-tRNA(Pro) + AMP + diphosphate. Functionally, catalyzes the attachment of proline to tRNA(Pro) in a two-step reaction: proline is first activated by ATP to form Pro-AMP and then transferred to the acceptor end of tRNA(Pro). As ProRS can inadvertently accommodate and process non-cognate amino acids such as alanine and cysteine, to avoid such errors it has two additional distinct editing activities against alanine. One activity is designated as 'pretransfer' editing and involves the tRNA(Pro)-independent hydrolysis of activated Ala-AMP. The other activity is designated 'posttransfer' editing and involves deacylation of mischarged Ala-tRNA(Pro). The misacylated Cys-tRNA(Pro) is not edited by ProRS. The protein is Proline--tRNA ligase of Xylella fastidiosa (strain M12).